We begin with the raw amino-acid sequence, 350 residues long: Biotin synthase (350 aa).

One can recognise a Radical SAM core domain in the interval 38 to 256 (NHVQVSTLLS…IAIARIMMPQ (219 aa)). The [4Fe-4S] cluster site is built by Cys53, Cys57, and Cys60. The [2Fe-2S] cluster site is built by Cys97, Cys128, Cys188, and Arg260.

Belongs to the radical SAM superfamily. Biotin synthase family. In terms of assembly, homodimer. Requires [4Fe-4S] cluster as cofactor. The cofactor is [2Fe-2S] cluster.

The catalysed reaction is (4R,5S)-dethiobiotin + (sulfur carrier)-SH + 2 reduced [2Fe-2S]-[ferredoxin] + 2 S-adenosyl-L-methionine = (sulfur carrier)-H + biotin + 2 5'-deoxyadenosine + 2 L-methionine + 2 oxidized [2Fe-2S]-[ferredoxin]. It functions in the pathway cofactor biosynthesis; biotin biosynthesis; biotin from 7,8-diaminononanoate: step 2/2. In terms of biological role, catalyzes the conversion of dethiobiotin (DTB) to biotin by the insertion of a sulfur atom into dethiobiotin via a radical-based mechanism. The chain is Biotin synthase from Vibrio parahaemolyticus serotype O3:K6 (strain RIMD 2210633).